We begin with the raw amino-acid sequence, 187 residues long: Large ribosomal subunit protein eL18A (187 aa).

Residues serine 16 and serine 64 each carry the phosphoserine modification. 3 positions are modified to phosphothreonine: threonine 87, threonine 89, and threonine 134. Residue serine 136 is modified to Phosphoserine. Threonine 138 carries the post-translational modification Phosphothreonine.

It belongs to the eukaryotic ribosomal protein eL18 family. Component of the large ribosomal subunit (LSU). Mature yeast ribosomes consist of a small (40S) and a large (60S) subunit. The 40S small subunit contains 1 molecule of ribosomal RNA (18S rRNA) and at least 33 different proteins. The large 60S subunit contains 3 rRNA molecules (25S, 5.8S and 5S rRNA) and at least 46 different proteins. eL18 interacts with NAP1.

The protein localises to the cytoplasm. Its function is as follows. Component of the ribosome, a large ribonucleoprotein complex responsible for the synthesis of proteins in the cell. The small ribosomal subunit (SSU) binds messenger RNAs (mRNAs) and translates the encoded message by selecting cognate aminoacyl-transfer RNA (tRNA) molecules. The large subunit (LSU) contains the ribosomal catalytic site termed the peptidyl transferase center (PTC), which catalyzes the formation of peptide bonds, thereby polymerizing the amino acids delivered by tRNAs into a polypeptide chain. The nascent polypeptides leave the ribosome through a tunnel in the LSU and interact with protein factors that function in enzymatic processing, targeting, and the membrane insertion of nascent chains at the exit of the ribosomal tunnel. In Schizosaccharomyces pombe (strain 972 / ATCC 24843) (Fission yeast), this protein is Large ribosomal subunit protein eL18A (rpl1801).